The chain runs to 300 residues: Protoheme IX farnesyltransferase (300 aa).

9 helical membrane passes run 21–43 (PRVVELLLLTTVPTMILAQRGVP), 45–65 (PLSVLSVLLGGAMSAGAAGAF), 94–114 (ASLIFAWMLCVISVLWFLLFV), 117–137 (LSALLSAIAVFLYAFFYSIVL), 145–167 (IVWGGLAGCMPVLIAWAAVTGSI), 171–193 (AIVLFAVVFLWTPPHYWPLSIHY), 213–233 (LVVLQVLLYAFAVVACTLLLI), 235–255 (VAHMTPLYGLFSAVLGAWFVY), and 272–292 (AMHIFSLSNTYLSLVFLSVGI).

This sequence belongs to the UbiA prenyltransferase family. Protoheme IX farnesyltransferase subfamily.

The protein localises to the cell membrane. The catalysed reaction is heme b + (2E,6E)-farnesyl diphosphate + H2O = Fe(II)-heme o + diphosphate. It functions in the pathway porphyrin-containing compound metabolism; heme O biosynthesis; heme O from protoheme: step 1/1. Converts heme B (protoheme IX) to heme O by substitution of the vinyl group on carbon 2 of heme B porphyrin ring with a hydroxyethyl farnesyl side group. The chain is Protoheme IX farnesyltransferase from Tropheryma whipplei (strain TW08/27) (Whipple's bacillus).